The following is a 217-amino-acid chain: Pyridoxine/pyridoxamine 5'-phosphate oxidase (217 aa).

Substrate contacts are provided by residues 13-16 (RREY) and Lys-71. FMN-binding positions include 66 to 71 (RIVLLK), 81 to 82 (YT), Arg-87, Lys-88, and Gln-110. The substrate site is built by Tyr-128, Arg-132, and Ser-136. Residues 145–146 (QS) and Trp-190 each bind FMN. Residue 196 to 198 (RLH) participates in substrate binding. Arg-200 is a binding site for FMN.

Belongs to the pyridoxamine 5'-phosphate oxidase family. As to quaternary structure, homodimer. It depends on FMN as a cofactor.

It carries out the reaction pyridoxamine 5'-phosphate + O2 + H2O = pyridoxal 5'-phosphate + H2O2 + NH4(+). The enzyme catalyses pyridoxine 5'-phosphate + O2 = pyridoxal 5'-phosphate + H2O2. It participates in cofactor metabolism; pyridoxal 5'-phosphate salvage; pyridoxal 5'-phosphate from pyridoxamine 5'-phosphate: step 1/1. It functions in the pathway cofactor metabolism; pyridoxal 5'-phosphate salvage; pyridoxal 5'-phosphate from pyridoxine 5'-phosphate: step 1/1. In terms of biological role, catalyzes the oxidation of either pyridoxine 5'-phosphate (PNP) or pyridoxamine 5'-phosphate (PMP) into pyridoxal 5'-phosphate (PLP). The protein is Pyridoxine/pyridoxamine 5'-phosphate oxidase of Yersinia enterocolitica serotype O:8 / biotype 1B (strain NCTC 13174 / 8081).